Consider the following 465-residue polypeptide: ATP-dependent protease ATPase subunit HslU (465 aa).

ATP-binding positions include valine 20, glycine 62 to glutamate 67, aspartate 277, glutamate 343, and arginine 415.

This sequence belongs to the ClpX chaperone family. HslU subfamily. In terms of assembly, a double ring-shaped homohexamer of HslV is capped on each side by a ring-shaped HslU homohexamer. The assembly of the HslU/HslV complex is dependent on binding of ATP.

The protein localises to the cytoplasm. Functionally, ATPase subunit of a proteasome-like degradation complex; this subunit has chaperone activity. The binding of ATP and its subsequent hydrolysis by HslU are essential for unfolding of protein substrates subsequently hydrolyzed by HslV. HslU recognizes the N-terminal part of its protein substrates and unfolds these before they are guided to HslV for hydrolysis. This chain is ATP-dependent protease ATPase subunit HslU, found in Geobacillus kaustophilus (strain HTA426).